The chain runs to 194 residues: MILSDKDIKKYLEERKLVIHPIDDPQKQIQPSSVDLRLGNSFLHFKVEGRAYIDPTKDNPQDLMEIIEIEEGKPFFLRPGEFVLGTTIETVKLPDDLVARVDGRSSLGRLGIIVHATAGYVDPGFCGQITLELSNINRVPVALYPGMRICQISFYKLTSPAETPYYKKAGSKYHNQKGPTASKLNIDFCVKEDK.

Residues 104-109 (RSSLGR), D122, 130-132 (TLE), Q151, Y165, K172, and Q176 contribute to the dCTP site. E132 functions as the Proton donor/acceptor in the catalytic mechanism.

The protein belongs to the dCTP deaminase family. Homotrimer.

The catalysed reaction is dCTP + 2 H2O = dUMP + NH4(+) + diphosphate. The protein operates within pyrimidine metabolism; dUMP biosynthesis; dUMP from dCTP: step 1/1. Bifunctional enzyme that catalyzes both the deamination of dCTP to dUTP and the hydrolysis of dUTP to dUMP without releasing the toxic dUTP intermediate. The protein is dCTP deaminase, dUMP-forming of Dictyoglomus turgidum (strain DSM 6724 / Z-1310).